Reading from the N-terminus, the 442-residue chain is Pentatricopeptide repeat-containing protein At2g27800, mitochondrial (442 aa).

A mitochondrion-targeting transit peptide spans 1 to 67 (MSATRSTFLG…SFLPSIHVRF (67 aa)). PPR repeat units lie at residues 206 to 236 (NENL…MVTS), 244 to 286 (TIRT…GIEP), 287 to 322 (DVFA…DCEP), 323 to 357 (NSFT…GFVP), 358 to 392 (NGKS…GRVV), and 393 to 427 (DFIS…QLVD).

It belongs to the PPR family. P subfamily.

The protein resides in the mitochondrion. The polypeptide is Pentatricopeptide repeat-containing protein At2g27800, mitochondrial (Arabidopsis thaliana (Mouse-ear cress)).